We begin with the raw amino-acid sequence, 511 residues long: Maturase K (511 aa).

The protein belongs to the intron maturase 2 family. MatK subfamily.

It localises to the plastid. The protein localises to the chloroplast. Its function is as follows. Usually encoded in the trnK tRNA gene intron. Probably assists in splicing its own and other chloroplast group II introns. The polypeptide is Maturase K (Chloranthus spicatus (Chulantree)).